The sequence spans 293 residues: 4-hydroxy-tetrahydrodipicolinate synthase (293 aa).

Position 45 (threonine 45) interacts with pyruvate. Tyrosine 133 functions as the Proton donor/acceptor in the catalytic mechanism. Catalysis depends on lysine 161, which acts as the Schiff-base intermediate with substrate. Pyruvate is bound at residue isoleucine 204.

The protein belongs to the DapA family. Homotetramer; dimer of dimers.

It is found in the cytoplasm. The catalysed reaction is L-aspartate 4-semialdehyde + pyruvate = (2S,4S)-4-hydroxy-2,3,4,5-tetrahydrodipicolinate + H2O + H(+). It functions in the pathway amino-acid biosynthesis; L-lysine biosynthesis via DAP pathway; (S)-tetrahydrodipicolinate from L-aspartate: step 3/4. Functionally, catalyzes the condensation of (S)-aspartate-beta-semialdehyde [(S)-ASA] and pyruvate to 4-hydroxy-tetrahydrodipicolinate (HTPA). This Yersinia pseudotuberculosis serotype O:1b (strain IP 31758) protein is 4-hydroxy-tetrahydrodipicolinate synthase.